The following is an 89-amino-acid chain: Cornifin-B (89 aa).

A disordered region spans residues 1-29; sequence MSSQQQKQPCTPPPQLQQQQVKQPCQPPP. 8 consecutive repeat copies span residues 3–14, 18–29, 31–38, 39–46, 47–54, 55–62, 63–70, and 71–78. The interval 3–29 is 2 X 12 AA approximate repeats; that stretch reads SQQQKQPCTPPPQLQQQQVKQPCQPPP. Residues 31-78 are 6 X 8 AA approximate tandem repeats; the sequence is EPCIPKTKEPCHPKVPEPCHPKVPEPCQPKVPEPCHPKVPEPCPSIVT.

It belongs to the cornifin (SPRR) family. In terms of processing, the N-terminus is blocked. In terms of tissue distribution, suprabasal layers of squamous-differentiated tissues such as epidermis, esophagus, tongue and trachea.

It is found in the cytoplasm. Cross-linked envelope protein of keratinocytes. It is a keratinocyte protein that first appears in the cell cytosol, but ultimately becomes cross-linked to membrane proteins by transglutaminase. All that results in the formation of an insoluble envelope beneath the plasma membrane. Can function as both amine donor and acceptor in transglutaminase-mediated cross-linkage. The sequence is that of Cornifin-B (SPRR1B) from Homo sapiens (Human).